Consider the following 136-residue polypeptide: Large ribosomal subunit protein uL22 (136 aa).

Belongs to the universal ribosomal protein uL22 family. In terms of assembly, part of the 50S ribosomal subunit.

Its function is as follows. This protein binds specifically to 23S rRNA; its binding is stimulated by other ribosomal proteins, e.g. L4, L17, and L20. It is important during the early stages of 50S assembly. It makes multiple contacts with different domains of the 23S rRNA in the assembled 50S subunit and ribosome. Functionally, the globular domain of the protein is located near the polypeptide exit tunnel on the outside of the subunit, while an extended beta-hairpin is found that lines the wall of the exit tunnel in the center of the 70S ribosome. In Leifsonia xyli subsp. xyli (strain CTCB07), this protein is Large ribosomal subunit protein uL22.